We begin with the raw amino-acid sequence, 244 residues long: Glucosamine-6-phosphate deaminase (244 aa).

Catalysis depends on Asp-67, which acts as the Proton acceptor; for enolization step. The For ring-opening step role is filled by Asn-136. His-138 acts as the Proton acceptor; for ring-opening step in catalysis. The active-site For ring-opening step is the Glu-143.

The protein belongs to the glucosamine/galactosamine-6-phosphate isomerase family. NagB subfamily.

The catalysed reaction is alpha-D-glucosamine 6-phosphate + H2O = beta-D-fructose 6-phosphate + NH4(+). It functions in the pathway amino-sugar metabolism; N-acetylneuraminate degradation; D-fructose 6-phosphate from N-acetylneuraminate: step 5/5. Catalyzes the reversible isomerization-deamination of glucosamine 6-phosphate (GlcN6P) to form fructose 6-phosphate (Fru6P) and ammonium ion. In Clostridium botulinum (strain 657 / Type Ba4), this protein is Glucosamine-6-phosphate deaminase.